The following is a 59-amino-acid chain: Antitoxin RelB4 (59 aa).

The disordered stretch occupies residues 38 to 59 (VGEWLKTLGTPHQTPPPYSWRK). Over residues 50–59 (QTPPPYSWRK) the composition is skewed to pro residues.

In terms of biological role, antitoxin component of a type II toxin-antitoxin (TA) system. Neutralizes the effect of cognate toxin RelE4, but no other RelE or ParE toxin. The sequence is that of Antitoxin RelB4 (relB4) from Caulobacter vibrioides (strain ATCC 19089 / CIP 103742 / CB 15) (Caulobacter crescentus).